We begin with the raw amino-acid sequence, 294 residues long: Ankyrin repeat and SOCS box protein 9 (294 aa).

Methionine 1 bears the N-acetylmethionine mark. ANK repeat units follow at residues serine 35–isoleucine 64, aspartate 68–glycine 97, aspartate 101–proline 130, aspartate 133–histidine 162, histidine 166–glutamine 195, and glycine 198–alanine 227. Phosphoserine is present on serine 51. Positions proline 240–leucine 294 constitute an SOCS box domain.

Belongs to the ankyrin SOCS box (ASB) family. Substrate-recognition component of the ECS(ASB9) complex, composed of ASB9, CUL5, ELOB, ELOC and RNF7/RBX2. As to expression, predominantly expressed in testis, kidney, and liver.

It localises to the mitochondrion. Its pathway is protein modification; protein ubiquitination. In terms of biological role, substrate-recognition component of a cullin-5-RING E3 ubiquitin-protein ligase complex (ECS complex, also named CRL5 complex), which mediates the ubiquitination and subsequent proteasomal degradation of target proteins. The ECS(ASB9) complex catalyzes ubiquitination of creatine kinases CKB and CKMT1A. Functionally, does not interact with the Elongin BC complex, likely to be a negative regulator of isoform 1. The polypeptide is Ankyrin repeat and SOCS box protein 9 (Homo sapiens (Human)).